The following is an 88-amino-acid chain: uncharacterized protein (88 aa).

This is an uncharacterized protein from Orgyia pseudotsugata (Douglas-fir tussock moth).